The following is a 535-amino-acid chain: Peptide chain release factor 3 (535 aa).

The 270-residue stretch at 8-277 (KRRRTFAIIS…TLVELAPPPG (270 aa)) folds into the tr-type G domain. Residues 17–24 (SHPDAGKT), 85–89 (DTPGH), and 139–142 (NKLD) each bind GTP.

The protein belongs to the TRAFAC class translation factor GTPase superfamily. Classic translation factor GTPase family. PrfC subfamily.

Its subcellular location is the cytoplasm. Functionally, increases the formation of ribosomal termination complexes and stimulates activities of RF-1 and RF-2. It binds guanine nucleotides and has strong preference for UGA stop codons. It may interact directly with the ribosome. The stimulation of RF-1 and RF-2 is significantly reduced by GTP and GDP, but not by GMP. The polypeptide is Peptide chain release factor 3 (Nitrosomonas europaea (strain ATCC 19718 / CIP 103999 / KCTC 2705 / NBRC 14298)).